Reading from the N-terminus, the 165-residue chain is Peptide methionine sulfoxide reductase MsrA (165 aa).

Residue C10 is part of the active site.

Belongs to the MsrA Met sulfoxide reductase family.

The enzyme catalyses L-methionyl-[protein] + [thioredoxin]-disulfide + H2O = L-methionyl-(S)-S-oxide-[protein] + [thioredoxin]-dithiol. It catalyses the reaction [thioredoxin]-disulfide + L-methionine + H2O = L-methionine (S)-S-oxide + [thioredoxin]-dithiol. In terms of biological role, has an important function as a repair enzyme for proteins that have been inactivated by oxidation. Catalyzes the reversible oxidation-reduction of methionine sulfoxide in proteins to methionine. The polypeptide is Peptide methionine sulfoxide reductase MsrA (Campylobacter jejuni (strain RM1221)).